The following is a 453-amino-acid chain: Growth/differentiation factor 9 (453 aa).

Positions 1-27 (MALPNKFFLWFCCFAWLCFPISLDSLP) are cleaved as a signal peptide. The propeptide occupies 28 to 318 (SRGEAQIVAR…EGVRSSRHRR (291 aa)). 4 N-linked (GlcNAc...) asparagine glycosylation sites follow: asparagine 163, asparagine 236, asparagine 255, and asparagine 269. Residues 304–328 (GEEAAEGVRSSRHRRDQESASSELK) form a disordered region. The span at 318–328 (RDQESASSELK) shows a compositional bias: basic and acidic residues. N-linked (GlcNAc...) asparagine glycosylation is present at asparagine 337. Intrachain disulfides connect cysteine 352–cysteine 418, cysteine 381–cysteine 450, and cysteine 385–cysteine 452.

Belongs to the TGF-beta family. In terms of assembly, homodimer or heterodimer (Potential). But, in contrast to other members of this family, cannot be disulfide-linked. Post-translationally, phosphorylated; phosphorylation is critical for GDF9 function.

The protein localises to the secreted. Required for ovarian folliculogenesis. The chain is Growth/differentiation factor 9 (GDF9) from Ovis aries (Sheep).